Here is a 146-residue protein sequence, read N- to C-terminus: Aminoglycoside N(6')-acetyltransferase type 1 (146 aa).

The 146-residue stretch at 1–146 folds into the N-acetyltransferase domain; sequence MIVICDHDNL…RVVFYRKTLG (146 aa). Positions 21, 66, 79, and 115 each coordinate substrate. An acetyl-CoA-binding site is contributed by Asn120. Glu136 is a binding site for substrate.

Homodimer.

It carries out the reaction kanamycin B + acetyl-CoA = N(6')-acetylkanamycin B + CoA + H(+). In terms of biological role, catalyzes the transfer of an acetyl group from acetyl-CoA to the 6'-amino group of aminoglycoside molecules conferring resistance to antibiotics containing the purpurosamine ring including amikacin, tobramycin, netilmicin, isepamicin and sisomicin. This is Aminoglycoside N(6')-acetyltransferase type 1 from Serratia marcescens.